The following is a 75-amino-acid chain: ATP synthase subunit c (75 aa).

Helical transmembrane passes span 8–28 and 54–74; these read FLGI…VSNI and AALT…LIFV.

The protein belongs to the ATPase C chain family. As to quaternary structure, F-type ATPases have 2 components, F(1) - the catalytic core - and F(0) - the membrane proton channel. F(1) has five subunits: alpha(3), beta(3), gamma(1), delta(1), epsilon(1). F(0) has three main subunits: a(1), b(2) and c(10-14). The alpha and beta chains form an alternating ring which encloses part of the gamma chain. F(1) is attached to F(0) by a central stalk formed by the gamma and epsilon chains, while a peripheral stalk is formed by the delta and b chains.

The protein resides in the cell inner membrane. Its function is as follows. F(1)F(0) ATP synthase produces ATP from ADP in the presence of a proton or sodium gradient. F-type ATPases consist of two structural domains, F(1) containing the extramembraneous catalytic core and F(0) containing the membrane proton channel, linked together by a central stalk and a peripheral stalk. During catalysis, ATP synthesis in the catalytic domain of F(1) is coupled via a rotary mechanism of the central stalk subunits to proton translocation. In terms of biological role, key component of the F(0) channel; it plays a direct role in translocation across the membrane. A homomeric c-ring of between 10-14 subunits forms the central stalk rotor element with the F(1) delta and epsilon subunits. In Neorickettsia sennetsu (strain ATCC VR-367 / Miyayama) (Ehrlichia sennetsu), this protein is ATP synthase subunit c.